The sequence spans 56 residues: Small ribosomal subunit protein bS21 (56 aa).

Belongs to the bacterial ribosomal protein bS21 family.

In Geobacillus stearothermophilus (Bacillus stearothermophilus), this protein is Small ribosomal subunit protein bS21 (rpsU).